The chain runs to 416 residues: Leu/Ile/Val-binding protein homolog 4 (416 aa).

A signal peptide spans 1 to 26 (MSLKVFLQAGVACAALSLAGAAGASA).

This sequence belongs to the leucine-binding protein family.

Functionally, component of an amino-acid transport system. The protein is Leu/Ile/Val-binding protein homolog 4 of Brucella abortus (strain 2308).